A 790-amino-acid chain; its full sequence is Cadherin-6 (790 aa).

Residues 1–30 form the signal peptide; the sequence is MRTYHCFWLLFWAGQPHQSFLTLLSKRTSG. The propeptide occupies 31–53; it reads FPEKEKVLVLSGNSRRDLSRSKR. Cadherin domains follow at residues 54–159, 160–268, 269–383, 384–486, and 487–608; these read SWMW…EPMF, TKDV…PPRF, PQST…PPVF, SRPA…DNAP, and EFAM…LIHP. Residues 54–615 are Extracellular-facing; the sequence is SWMWNQFFLL…IHPTGLSTGA (562 aa). Residues Asn-165 and Asn-255 are each glycosylated (N-linked (GlcNAc...) asparagine). The interval 261–289 is disordered; it reads VNDNPPRFPQSTYQFRAPESTPPDSPIGR. N-linked (GlcNAc...) asparagine glycans are attached at residues Asn-437, Asn-455, and Asn-536. The helical transmembrane segment at 616–636 threads the bilayer; the sequence is LIAILLCIIILLVTVVLFAAL. The Cytoplasmic segment spans residues 637–790; that stretch reads RRQRKKEPLI…YGSMDSDKDS (154 aa).

It localises to the cell membrane. In terms of biological role, cadherins are calcium-dependent cell adhesion proteins. They preferentially interact with themselves in a homophilic manner in connecting cells; cadherins may thus contribute to the sorting of heterogeneous cell types. The polypeptide is Cadherin-6 (CDH6) (Gallus gallus (Chicken)).